The following is a 113-amino-acid chain: uncharacterized protein (113 aa).

The transit peptide at 1 to 14 (MATRNALRIVSRRF) directs the protein to the mitochondrion. Residues 41-79 (QKLARQGPGEQAAGSASEAKVAGATASASAESGPKVSED) form a disordered region. Low complexity predominate over residues 55-73 (SASEAKVAGATASASAESG).

It localises to the mitochondrion. This is an uncharacterized protein from Arabidopsis thaliana (Mouse-ear cress).